Consider the following 293-residue polypeptide: Acetyl-coenzyme A carboxylase carboxyl transferase subunit beta (293 aa).

A CoA carboxyltransferase N-terminal domain is found at 29-293 (LWSKCPECGQ…GCKPMELTSA (265 aa)). Zn(2+) contacts are provided by cysteine 33, cysteine 36, cysteine 52, and cysteine 55. The segment at 33–55 (CPECGQVVYLKDLKLNASVCANC) adopts a C4-type zinc-finger fold.

Belongs to the AccD/PCCB family. In terms of assembly, acetyl-CoA carboxylase is a heterohexamer composed of biotin carboxyl carrier protein (AccB), biotin carboxylase (AccC) and two subunits each of ACCase subunit alpha (AccA) and ACCase subunit beta (AccD). Zn(2+) serves as cofactor.

Its subcellular location is the cytoplasm. It catalyses the reaction N(6)-carboxybiotinyl-L-lysyl-[protein] + acetyl-CoA = N(6)-biotinyl-L-lysyl-[protein] + malonyl-CoA. It functions in the pathway lipid metabolism; malonyl-CoA biosynthesis; malonyl-CoA from acetyl-CoA: step 1/1. Functionally, component of the acetyl coenzyme A carboxylase (ACC) complex. Biotin carboxylase (BC) catalyzes the carboxylation of biotin on its carrier protein (BCCP) and then the CO(2) group is transferred by the transcarboxylase to acetyl-CoA to form malonyl-CoA. In Synechococcus sp. (strain CC9605), this protein is Acetyl-coenzyme A carboxylase carboxyl transferase subunit beta.